The following is a 397-amino-acid chain: Acetate kinase 1 (397 aa).

Asparagine 8 contributes to the Mg(2+) binding site. Position 15 (lysine 15) interacts with ATP. Arginine 89 provides a ligand contact to substrate. The active-site Proton donor/acceptor is aspartate 146. Residues 206 to 210 (HLGNG), 281 to 283 (DLR), and 329 to 333 (GIGEN) contribute to the ATP site. Glutamate 382 lines the Mg(2+) pocket.

This sequence belongs to the acetokinase family. As to quaternary structure, homodimer. Mg(2+) serves as cofactor. Requires Mn(2+) as cofactor.

It localises to the cytoplasm. It catalyses the reaction acetate + ATP = acetyl phosphate + ADP. Its pathway is metabolic intermediate biosynthesis; acetyl-CoA biosynthesis; acetyl-CoA from acetate: step 1/2. In terms of biological role, catalyzes the formation of acetyl phosphate from acetate and ATP. Can also catalyze the reverse reaction. In Listeria innocua serovar 6a (strain ATCC BAA-680 / CLIP 11262), this protein is Acetate kinase 1.